The sequence spans 229 residues: Prolactin (229 aa).

A signal peptide spans 1 to 30 (MDKKRSSLKGSLLLLLLLVSDLLLCKSVAS). C34 and C41 form a disulfide bridge. S56 is subject to Phosphoserine. The N-linked (GlcNAc...) asparagine; partial glycan is linked to N61. Phosphoserine is present on residues S64 and S120. 2 cysteine pairs are disulfide-bonded: C88–C204 and C221–C229.

This sequence belongs to the somatotropin/prolactin family. Interacts with PRLR.

The protein resides in the secreted. Its function is as follows. Prolactin acts primarily on the mammary gland by promoting lactation. The protein is Prolactin (PRL) of Equus caballus (Horse).